Reading from the N-terminus, the 349-residue chain is Fructose-1,6-bisphosphatase class 1 (349 aa).

4 residues coordinate Mg(2+): Glu-113, Asp-135, Ile-137, and Asp-138. Residues 138–141 (DGSS), Asn-230, Tyr-258, and Lys-288 each bind substrate. Residue Glu-294 coordinates Mg(2+).

It belongs to the FBPase class 1 family. Homotetramer. Mg(2+) serves as cofactor.

The protein resides in the cytoplasm. The enzyme catalyses beta-D-fructose 1,6-bisphosphate + H2O = beta-D-fructose 6-phosphate + phosphate. It functions in the pathway carbohydrate biosynthesis; Calvin cycle. The polypeptide is Fructose-1,6-bisphosphatase class 1 (Trichormus variabilis (strain ATCC 29413 / PCC 7937) (Anabaena variabilis)).